Reading from the N-terminus, the 538-residue chain is MKIYLRFVWILIIILNFLLNLFITTNGVIIVNAFKKSLIVAASFASLSLFNSATAELVYKPLEQPVEPAKPDLKIESVNEKFAEKYPNQYNSWRSTANGDGENIIYADEENPRLIVLWGGYAFAKEYNAPRGHFYAVTDVRNILRTGAPKTANDGPQAMACWTCKGPDVPRLIAEWGEKDYFNAKWAKGGPEIVNSIGCADCHDTTSKDFAEGKPALRIARPHVLRALDALEKATAEKDKAEGRPHNNLSFNTAARTEKRAEICANCHVEYYFAGDIKQVTFPWDNGQTVDDIEKYYDDIGFTDWTHSLSKAPMLKAQHPDFEIWSLGMHGKNGVTCVDCHMPKVQGADGKVYTDHQIQNPFEAFDSTCANCHDQSKEKLRDIVTSRKKEVKDVMGRLEDQVVKAHFEAKEAWDAGATKKEMEAALMDIRHAQWRWDYTAASHGGHMHAPEVVLRVLASGLDKVADARTKLAVILTKHGVKTPVQIPDISTADKAWKVMGIDIEKERKAKEEFLKTVVPQWEQQAREKGLLVDPPAQK.

Positions 1-55 are cleaved as a signal peptide; that stretch reads MKIYLRFVWILIIILNFLLNLFITTNGVIIVNAFKKSLIVAASFASLSLFNSATA. H133 contributes to the heme c binding site. The heme site is built by C161, C164, and K165. Residues C199, C202, H203, C264, C267, and H268 each contribute to the heme c site. Residues E270, Y271, K316, and Q318 each contribute to the Ca(2+) site. Substrate is bound at residue Y271. Substrate is bound at residue H319. Residues H330, C337, C340, H341, H356, C369, C372, H373, and H448 each coordinate heme c.

This sequence belongs to the cytochrome c-552 family. The cofactor is Ca(2+). Heme c serves as cofactor.

The protein resides in the periplasm. The enzyme catalyses 6 Fe(III)-[cytochrome c] + NH4(+) + 2 H2O = 6 Fe(II)-[cytochrome c] + nitrite + 8 H(+). It functions in the pathway nitrogen metabolism; nitrate reduction (assimilation). Catalyzes the reduction of nitrite to ammonia, consuming six electrons in the process. The protein is Cytochrome c-552 of Haemophilus influenzae (strain ATCC 51907 / DSM 11121 / KW20 / Rd).